A 741-amino-acid polypeptide reads, in one-letter code: ABC transporter D family member 2 (741 aa).

Transmembrane regions (helical) follow at residues 39-59 (GSLGKKVFILLALGGGAFSLV), 119-139 (FLSLLYLTALLFARTMLSVSI), and 260-280 (VVVMGWGSPLLMFSYFIVSGF). One can recognise an ABC transmembrane type-1 domain in the interval 131 to 409 (ARTMLSVSIA…LMVALSQAIG (279 aa)). One can recognise an ABC transporter domain in the interval 518–740 (IKFENVSIVS…DDDHLKKPLS (223 aa)). Residue 551–558 (GPNGSGKS) coordinates ATP.

It belongs to the ABC transporter superfamily. ABCD family. Peroxisomal fatty acyl CoA transporter (TC 3.A.1.203) subfamily.

It is found in the membrane. This chain is ABC transporter D family member 2 (abcD2), found in Dictyostelium discoideum (Social amoeba).